The following is a 306-amino-acid chain: Ribosomal protein L11 methyltransferase (306 aa).

4 residues coordinate S-adenosyl-L-methionine: threonine 154, glycine 179, aspartate 201, and asparagine 242.

The protein belongs to the methyltransferase superfamily. PrmA family.

It localises to the cytoplasm. The enzyme catalyses L-lysyl-[protein] + 3 S-adenosyl-L-methionine = N(6),N(6),N(6)-trimethyl-L-lysyl-[protein] + 3 S-adenosyl-L-homocysteine + 3 H(+). Its function is as follows. Methylates ribosomal protein L11. In Xylella fastidiosa (strain 9a5c), this protein is Ribosomal protein L11 methyltransferase.